The primary structure comprises 321 residues: NADH-ubiquinone oxidoreductase chain 1 (321 aa).

8 helical membrane passes run 7-27, 73-93, 104-124, 148-168, 175-195, 227-247, 256-276, and 297-317; these read ITNSLMYIIPILIAVAFLTLM, ILLILSPMLALTTALLIWTPI, LGLLSTLAISSMAVNSTLWAG, VTLGIILLSTLMLTGGFTMQL, HTWLLTTSWPLAMMWFISTLA, FFLAEYTNIISMNLLTCILFI, ELFLTNLIIKTMILSMSFLWI, and LPLTMALCLLHTSLSISISGI.

Belongs to the complex I subunit 1 family.

The protein resides in the mitochondrion inner membrane. The enzyme catalyses a ubiquinone + NADH + 5 H(+)(in) = a ubiquinol + NAD(+) + 4 H(+)(out). Core subunit of the mitochondrial membrane respiratory chain NADH dehydrogenase (Complex I) that is believed to belong to the minimal assembly required for catalysis. Complex I functions in the transfer of electrons from NADH to the respiratory chain. The immediate electron acceptor for the enzyme is believed to be ubiquinone. The protein is NADH-ubiquinone oxidoreductase chain 1 (MT-ND1) of Varanus dumerilii (Dumeril's monitor).